The following is a 215-amino-acid chain: Large ribosomal subunit protein uL1 (215 aa).

It belongs to the universal ribosomal protein uL1 family. Part of the 50S ribosomal subunit.

Binds directly to 23S rRNA. Probably involved in E site tRNA release. Functionally, protein L1 is also a translational repressor protein, it controls the translation of its operon by binding to its mRNA. The polypeptide is Large ribosomal subunit protein uL1 (Cenarchaeum symbiosum (strain A)).